Consider the following 66-residue polypeptide: MDWNRIEGNWKQFKGSAKEKWAKLTDDDLKLIEGRREQLEGRLQERYGKAKDQVRQDVDDWLKTLH.

Belongs to the UPF0337 (CsbD) family.

This chain is UPF0337 protein bsl1473, found in Bradyrhizobium diazoefficiens (strain JCM 10833 / BCRC 13528 / IAM 13628 / NBRC 14792 / USDA 110).